Here is a 229-residue protein sequence, read N- to C-terminus: MSLLAQLDQKIAANGGLIVSCQPIPDSPLDKPEIVAAMALAAEQAGAVAIRIEGVANLQATRAVVSVPIIGIVKRDLEDSPVRITAYIEDVDALAQAGADIIAIDGTDRPRPVPVETLLARIHHHGLLAMTDCSTPEDGLACQKLGAEIIGTTLSGYTTPETPEEPDLALVKTLSEAGCRVIAEGRYNTPAQAADAMRHGAWAVTVGSAITRLEHICQWYNTAMKKAVL.

This sequence belongs to the NanE family.

The enzyme catalyses an N-acyl-D-glucosamine 6-phosphate = an N-acyl-D-mannosamine 6-phosphate. The protein operates within amino-sugar metabolism; N-acetylneuraminate degradation; D-fructose 6-phosphate from N-acetylneuraminate: step 3/5. Functionally, converts N-acetylmannosamine-6-phosphate (ManNAc-6-P) to N-acetylglucosamine-6-phosphate (GlcNAc-6-P). This is Putative N-acetylmannosamine-6-phosphate 2-epimerase from Shigella sonnei (strain Ss046).